The sequence spans 757 residues: MDVNPTLLFLKVPAQNAISTTFPYTGDPPYSHGTGTGYTMDTVNRTHQYSEKGKWTTNTETGAPQLNPIDGPLPEDNEPSGYAQTDCVLEAMAFLEESHPGIFENSCLETMEVVQQTRVDKLTQGRQTYDWTLNRNQPAATALANTIEVFRSNGLTANESGRLIDFLKDVMESMDKEGMEITTHFQRKRRVRDNMTKKMVTQRTIGKKKQRLNKRSYLIRALTLNTMTKDAERGKLKRRAIATPGMQIRGFVYFVETLARSICEKLEQSGLPVGGNEKKAKLANVVRKMMTNSQDTELSFTITGDNTKWNENQNPRMFLAMITYITRNQPEWFRNVLSIAPIMFSNKMARLGKGYMFESKSMKLRTQIPAEMLANIDLKYFNESTRKKIEKIRPLLIDGTASLSPGMMMGMFNMLSTVLGVSILNLGQKRYTKTTYWWDGLQSSDDFALIVNAPNHEGIQAGVDRFYRTCKLVGINMSKKKSYINRTGTFEFTSFFYRYGFVANFSMELPSFGVSGINESADMSIGVTVIKNNMINNDLGPATAQMALQLFIKDYRYTYRCHRGDTQIQTRRSFELKKLWEQTRSKAGLLVSDGGPNLYNIRNLHIPEVCLKWELMDEDYQGRLCNPLNPFVSHKEIESVNNAVVMPAHGPAKSMEYDAVATTHSWIPKRNRSILNTSQRGILEDEQMYQKCCNLFEKFFPSSSYRRPVGISSMVEAMVSRARIDARIDFESGRIKKEEFAEIMKICSTIEELRRQK.

A disordered region spans residues 50-82 (SEKGKWTTNTETGAPQLNPIDGPLPEDNEPSGY). Over residues 55-64 (WTTNTETGAP) the composition is skewed to polar residues. 2 consecutive short sequence motifs (nuclear localization signal) follow at residues 187–195 (RKRRVRDNM) and 203–216 (RTIG…NKRS). Positions 249-256 (RGFVYFVE) are promoter-binding site. One can recognise a RdRp catalytic domain in the interval 286 to 483 (VRKMMTNSQD…GINMSKKKSY (198 aa)).

The protein belongs to the influenza viruses polymerase PB1 family. As to quaternary structure, influenza RNA polymerase is composed of three subunits: PB1, PB2 and PA. Interacts (via N-terminus) with PA (via C-terminus). Interacts (via C-terminus) with PB2 (via N-terminus); this interaction is essential for transcription initiation. Phosphorylated by host PRKCA.

The protein localises to the host nucleus. Its subcellular location is the host cytoplasm. It carries out the reaction RNA(n) + a ribonucleoside 5'-triphosphate = RNA(n+1) + diphosphate. RNA-dependent RNA polymerase which is responsible for replication and transcription of virus RNA segments. The transcription of viral mRNAs occurs by a unique mechanism called cap-snatching. 5' methylated caps of cellular mRNAs are cleaved after 10-13 nucleotides by PA. In turn, these short capped RNAs are used as primers by PB1 for transcription of viral mRNAs. During virus replication, PB1 initiates RNA synthesis and copy vRNA into complementary RNA (cRNA) which in turn serves as a template for the production of more vRNAs. This is RNA-directed RNA polymerase catalytic subunit from Influenza A virus (strain A/Turkey/Minnesota/501/1978 H6N8).